The chain runs to 248 residues: Triosephosphate isomerase (248 aa).

14–16 (NWK) provides a ligand contact to substrate. The Electrophile role is filled by H99. Catalysis depends on E170, which acts as the Proton acceptor. Substrate is bound by residues G176, S212, and 233–234 (GG).

The protein belongs to the triosephosphate isomerase family. In terms of assembly, homodimer.

The protein resides in the cytoplasm. It catalyses the reaction D-glyceraldehyde 3-phosphate = dihydroxyacetone phosphate. It participates in carbohydrate biosynthesis; gluconeogenesis. The protein operates within carbohydrate degradation; glycolysis; D-glyceraldehyde 3-phosphate from glycerone phosphate: step 1/1. Functionally, involved in the gluconeogenesis. Catalyzes stereospecifically the conversion of dihydroxyacetone phosphate (DHAP) to D-glyceraldehyde-3-phosphate (G3P). In Bordetella bronchiseptica (strain ATCC BAA-588 / NCTC 13252 / RB50) (Alcaligenes bronchisepticus), this protein is Triosephosphate isomerase.